Consider the following 60-residue polypeptide: Metallothionein (60 aa).

A beta region spans residues 1–28 (MDPCECSKTGKCSCGGSCTCTNCSCTSC). Positions 4, 6, 12, 14, 18, 20, 23, 25, 28, 32, 33, 35, 36, 40, 43, 47, 49, 54, 58, and 59 each coordinate a divalent metal cation. The tract at residues 29 to 60 (KKSCCPCCPSGCSKCASGCVCKGKTCDTSCCQ) is alpha.

Belongs to the metallothionein superfamily. Type 1 family.

Metallothioneins have a high content of cysteine residues that bind various heavy metals. This chain is Metallothionein (mt), found in Chelon auratus (Golden grey mullet).